The chain runs to 96 residues: Small ribosomal subunit protein bS6 (96 aa).

This sequence belongs to the bacterial ribosomal protein bS6 family.

Functionally, binds together with bS18 to 16S ribosomal RNA. The sequence is that of Small ribosomal subunit protein bS6 from Streptococcus sanguinis (strain SK36).